Consider the following 397-residue polypeptide: MEDFKMKTLAAFLSLLVLCWAQEEAKLTKANNRFGLRLLRALPSGPEKNVFFSPYSVSAAMGMAFAGARGQTQQELSQGLGFSDVDLTDAGVLDAYTHHTERLKSTPSNSTLDVANAAAIQRTLALLNSYESALQSSFGAELHKVDFAGEPQAAVDFVNNWVKRKTHDKIEKLFNEPLDPDTLLVLLNAIYFKGEWNTAFVKEHTEKRQFFNGGVTPVEVDTMRLEARIKYRFFDDLQVEVVELPYRGLDYTMAILLPKENTGVEGLKQNLTVDRFQNYLSDLRERKITVLLPKFKLETKYSLKAPLQSLGIKQIFESGADLSGINDERLRVSAVEHKAVVEVNEEGTVAAATTGVVIVPYSLGPEPVVFRVDHPFLFFIRNTRTDDIFFVGQVNKL.

Positions 1 to 21 are cleaved as a signal peptide; that stretch reads MEDFKMKTLAAFLSLLVLCWA. 2 N-linked (GlcNAc...) asparagine glycosylation sites follow: asparagine 109 and asparagine 270.

Belongs to the serpin family. In terms of assembly, interacts with mouse MCPT4. Female salivary gland. Ovary. Midgut.

Its subcellular location is the secreted. Functionally, serine protease inhibitor that modulates blood feeding of ticks on vertebrate species. Inhibits host trypsin, thrombin (F2), alpha-chymotrypsin, cathepsin G (CTSG) and mast cell chymase (CMA1). Inhibits host cathepsin G- and thrombin-induced platelet aggregation. Inhibits acute inflammation in the host. Suppresses neutrophil recruitment in inflamed area. Does not inhibit host plasmin (PLG), factor Xa (F10), factor XIa (F11), elastase and proteinase 3/myeloblastin (PRTN3). (Microbial infection) Inhibits IL6 production by mouse splenic dendritic cells in response to Borrelia burgdorferi exposure. Decreases levels of STAT3 phosphorylation in mouse splenic dendritic cells in response to Borrelia burgdorferi exposure and in Borrelia-primed CD4+ T-lymphocytes. Inhibits differentiation of mouse Th17 cells, a subset of CD4+ T-lymphocytes that play a crucial role in protection against extracellular bacteria, in response to Borrelia burgdorferi exposure via inhibition of the IL6/STAT3 signaling pathway. This Ixodes ricinus (Common tick) protein is Iripin-2.